The sequence spans 276 residues: Aspartate dehydrogenase domain-containing protein (276 aa).

It belongs to the L-aspartate dehydrogenase family.

The polypeptide is Aspartate dehydrogenase domain-containing protein (aspdh) (Danio rerio (Zebrafish)).